A 234-amino-acid polypeptide reads, in one-letter code: Orotidine 5'-phosphate decarboxylase (234 aa).

Substrate contacts are provided by residues Asp10, Lys32, 59 to 68, Thr119, Arg180, Gln189, Gly209, and Arg210; that span reads DLKFHDIPNT. Catalysis depends on Lys61, which acts as the Proton donor.

This sequence belongs to the OMP decarboxylase family. Type 1 subfamily. Homodimer.

The enzyme catalyses orotidine 5'-phosphate + H(+) = UMP + CO2. Its pathway is pyrimidine metabolism; UMP biosynthesis via de novo pathway; UMP from orotate: step 2/2. Its function is as follows. Catalyzes the decarboxylation of orotidine 5'-monophosphate (OMP) to uridine 5'-monophosphate (UMP). The chain is Orotidine 5'-phosphate decarboxylase from Mannheimia succiniciproducens (strain KCTC 0769BP / MBEL55E).